The sequence spans 122 residues: Large ribosomal subunit protein uL18 (122 aa).

This sequence belongs to the universal ribosomal protein uL18 family. Part of the 50S ribosomal subunit; part of the 5S rRNA/L5/L18/L25 subcomplex. Contacts the 5S and 23S rRNAs.

In terms of biological role, this is one of the proteins that bind and probably mediate the attachment of the 5S RNA into the large ribosomal subunit, where it forms part of the central protuberance. This is Large ribosomal subunit protein uL18 from Desulforamulus reducens (strain ATCC BAA-1160 / DSM 100696 / MI-1) (Desulfotomaculum reducens).